A 185-amino-acid chain; its full sequence is Photosystem I assembly protein Ycf4 (185 aa).

2 helical membrane-spanning segments follow: residues G20–A40 and I57–S77.

The protein belongs to the Ycf4 family.

It is found in the plastid. Its subcellular location is the chloroplast thylakoid membrane. Its function is as follows. Seems to be required for the assembly of the photosystem I complex. The sequence is that of Photosystem I assembly protein Ycf4 from Sorghum bicolor (Sorghum).